Reading from the N-terminus, the 297-residue chain is Large ribosomal subunit protein uL18 (297 aa).

Gly2 is modified (N-acetylglycine). N6-acetyllysine occurs at positions 5 and 48. Ser185 bears the Phosphoserine mark. Residue Lys220 is modified to N6-acetyllysine; alternate. Residue Lys220 forms a Glycyl lysine isopeptide (Lys-Gly) (interchain with G-Cter in SUMO1); alternate linkage. Lys220 is covalently cross-linked (Glycyl lysine isopeptide (Lys-Gly) (interchain with G-Cter in SUMO2); alternate). Position 232 is a phosphothreonine (Thr232). Residues 253–297 (YEKKPKREVKKKRWNRPKMSLAQKKDRVAQKKASFLRAQERAAES) are disordered. The segment covering 258–268 (KREVKKKRWNR) has biased composition (basic residues). Position 272 is a phosphoserine (Ser272).

The protein belongs to the universal ribosomal protein uL18 family. As to quaternary structure, component of the large ribosomal subunit (LSU). Part of the 5S RNP complex, which is a LSU subcomplex composed of the 5S RNA, RPL5 and RPL11. Component of a hexameric 5S RNP precursor complex, composed of 5S RNA, RRS1, RPF2/BXDC1, RPL5, RPL11 and HEATR3; this complex acts as a precursor for ribosome assembly. Interacts with NVL in an ATP-dependent manner. Interacts with RRP1B. Interacts with IPO5, IPO7 and KPNB1; these interactions may be involved in RPL5 nuclear import for the assembly of ribosomal subunits.

The protein localises to the cytoplasm. It localises to the nucleus. It is found in the nucleolus. Component of the ribosome, a large ribonucleoprotein complex responsible for the synthesis of proteins in the cell. The small ribosomal subunit (SSU) binds messenger RNAs (mRNAs) and translates the encoded message by selecting cognate aminoacyl-transfer RNA (tRNA) molecules. The large subunit (LSU) contains the ribosomal catalytic site termed the peptidyl transferase center (PTC), which catalyzes the formation of peptide bonds, thereby polymerizing the amino acids delivered by tRNAs into a polypeptide chain. The nascent polypeptides leave the ribosome through a tunnel in the LSU and interact with protein factors that function in enzymatic processing, targeting, and the membrane insertion of nascent chains at the exit of the ribosomal tunnel. As part of the 5S RNP/5S ribonucleoprotein particle it is an essential component of the LSU, required for its formation and the maturation of rRNAs. It also couples ribosome biogenesis to p53/TP53 activation. As part of the 5S RNP it accumulates in the nucleoplasm and inhibits MDM2, when ribosome biogenesis is perturbed, mediating the stabilization and the activation of TP53. The chain is Large ribosomal subunit protein uL18 (Rpl5) from Mus musculus (Mouse).